A 144-amino-acid polypeptide reads, in one-letter code: Putative HTH-type transcriptional regulator aq_268 (144 aa).

The HTH rrf2-type domain occupies I2 to N133.

This is Putative HTH-type transcriptional regulator aq_268 from Aquifex aeolicus (strain VF5).